A 482-amino-acid polypeptide reads, in one-letter code: tRNA sulfurtransferase (482 aa).

The THUMP domain maps to 61–165 (LTIRDALTRI…DDRLLLIKGR (105 aa)). Residues 183–184 (LI), K265, G287, and Q296 each bind ATP. Residues C344 and C456 are joined by a disulfide bond. Positions 404-482 (FGPNDVILDI…GFNNVKVYRP (79 aa)) constitute a Rhodanese domain. C456 functions as the Cysteine persulfide intermediate in the catalytic mechanism.

Belongs to the ThiI family.

It localises to the cytoplasm. The enzyme catalyses [ThiI sulfur-carrier protein]-S-sulfanyl-L-cysteine + a uridine in tRNA + 2 reduced [2Fe-2S]-[ferredoxin] + ATP + H(+) = [ThiI sulfur-carrier protein]-L-cysteine + a 4-thiouridine in tRNA + 2 oxidized [2Fe-2S]-[ferredoxin] + AMP + diphosphate. The catalysed reaction is [ThiS sulfur-carrier protein]-C-terminal Gly-Gly-AMP + S-sulfanyl-L-cysteinyl-[cysteine desulfurase] + AH2 = [ThiS sulfur-carrier protein]-C-terminal-Gly-aminoethanethioate + L-cysteinyl-[cysteine desulfurase] + A + AMP + 2 H(+). Its pathway is cofactor biosynthesis; thiamine diphosphate biosynthesis. Catalyzes the ATP-dependent transfer of a sulfur to tRNA to produce 4-thiouridine in position 8 of tRNAs, which functions as a near-UV photosensor. Also catalyzes the transfer of sulfur to the sulfur carrier protein ThiS, forming ThiS-thiocarboxylate. This is a step in the synthesis of thiazole, in the thiamine biosynthesis pathway. The sulfur is donated as persulfide by IscS. In Shigella flexneri, this protein is tRNA sulfurtransferase.